The primary structure comprises 352 residues: tRNA pseudouridine synthase D (352 aa).

Asp-81 functions as the Nucleophile in the catalytic mechanism. The TRUD domain maps to Gly-157–Leu-303.

It belongs to the pseudouridine synthase TruD family.

It carries out the reaction uridine(13) in tRNA = pseudouridine(13) in tRNA. In terms of biological role, responsible for synthesis of pseudouridine from uracil-13 in transfer RNAs. This Pseudomonas syringae pv. syringae (strain B728a) protein is tRNA pseudouridine synthase D.